We begin with the raw amino-acid sequence, 577 residues long: E3 ubiquitin-protein ligase MSL2 (577 aa).

Residues 1-116 (MNPVNATALY…CEYITQTTLA (116 aa)) form a sufficient for interaction with MSL1 region. Zn(2+)-binding residues include Cys44, Cys47, Cys62, His64, Cys67, Cys70, Cys81, and Cys84. The segment at 44 to 85 (CCVCGHLLQDPIAPTNSTCQHYVCKTCKGKKMMMKPSCSWCK) adopts an RING-type zinc-finger fold. A Glycyl lysine isopeptide (Lys-Gly) (interchain with G-Cter in SUMO2) cross-link involves residue Lys375. The tract at residues 405-428 (TKSMKKSHEHGSKKSHSKSKPGIL) is disordered. A compositionally biased stretch (basic residues) spans 407-423 (SMKKSHEHGSKKSHSKS). Ser447 carries the post-translational modification Phosphoserine. A CXC MSL2-type domain is found at 457–508 (QEKKGCKCGRATQNPSVLTCRGQRCPCYSNRKACLDCICRGCQNSYMANGEK). Zn(2+)-binding residues include Cys462, Cys464, Cys476, Cys481, Cys483, Cys490, Cys493, Cys495, and Cys498.

This sequence belongs to the MSL2 family. Component of a multisubunit histone acetyltransferase complex (MSL) at least composed of the KAT8/MOF/MYST1, MSL1/hampin, MSL2 and MSL3. Forms a MSL heterotetrameric core with MSL1.

It is found in the nucleus. Its subcellular location is the chromosome. The enzyme catalyses S-ubiquitinyl-[E2 ubiquitin-conjugating enzyme]-L-cysteine + [acceptor protein]-L-lysine = [E2 ubiquitin-conjugating enzyme]-L-cysteine + N(6)-ubiquitinyl-[acceptor protein]-L-lysine.. It participates in protein modification; protein ubiquitination. In terms of biological role, non-catalytic component of the MSL histone acetyltransferase complex, a multiprotein complex that mediates the majority of histone H4 acetylation at 'Lys-16' (H4K16ac), an epigenetic mark that prevents chromatin compaction. The MSL complex is required for chromosome stability and genome integrity by maintaining homeostatic levels of H4K16ac. The MSL complex is also involved in gene dosage by promoting up-regulation of genes expressed by the X chromosome. X up-regulation is required to compensate for autosomal biallelic expression. The MSL complex also participates in gene dosage compensation by promoting expression of Tsix non-coding RNA. MSL2 plays a key role in gene dosage by ensuring biallelic expression of a subset of dosage-sensitive genes, including many haploinsufficient genes. Acts by promoting promoter-enhancer contacts, thereby preventing DNA methylation of one allele and creating a methylation-free environment for methylation-sensitive transcription factors such as SP1, KANSL1 and KANSL3. Also acts as an E3 ubiquitin ligase that promotes monoubiquitination of histone H2B at 'Lys-35' (H2BK34Ub), but not that of H2A. This activity is greatly enhanced by heterodimerization with MSL1. H2B ubiquitination in turn stimulates histone H3 methylation at 'Lys-4' (H3K4me) and 'Lys-79' (H3K79me) and leads to gene activation, including that of HOXA9 and MEIS1. The protein is E3 ubiquitin-protein ligase MSL2 of Mus musculus (Mouse).